The sequence spans 410 residues: uncharacterized protein (410 aa).

12 consecutive transmembrane segments (helical) span residues 27–47, 63–83, 97–117, 118–138, 145–165, 180–200, 228–248, 254–274, 293–313, 316–332, 355–375, and 378–398; these read ILAL…VQSI, SLAL…TGPL, LFIA…ISIV, LLRA…MTYI, NSLS…GFLG, ISLM…LYFL, VLFF…TIFN, LMLE…TIYL, NNIL…TQYN, FIII…FFAS, YLFF…FFWF, and QWLG…FLSF.

Belongs to the major facilitator superfamily.

Its subcellular location is the cell membrane. This is an uncharacterized protein from Buchnera aphidicola subsp. Acyrthosiphon pisum (strain APS) (Acyrthosiphon pisum symbiotic bacterium).